The primary structure comprises 61 residues: Sec-independent protein translocase protein TatA (61 aa).

The chain crosses the membrane as a helical span at residues 1–21 (MFSNIGFPGLILILVAVLILF).

This sequence belongs to the TatA/E family. In terms of assembly, forms a complex with TatC.

Its subcellular location is the cell membrane. Functionally, part of the twin-arginine translocation (Tat) system that transports large folded proteins containing a characteristic twin-arginine motif in their signal peptide across membranes. TatA could form the protein-conducting channel of the Tat system. The protein is Sec-independent protein translocase protein TatA of Bacillus anthracis (strain A0248).